Consider the following 426-residue polypeptide: Pistil-specific extensin-like protein (426 aa).

Positions methionine 1 to serine 23 are cleaved as a signal peptide. Disordered stretches follow at residues glycine 56–leucine 109 and asparagine 121–proline 254. Composition is skewed to pro residues over residues valine 60 to proline 94, proline 123 to proline 161, proline 168 to proline 224, and leucine 231 to proline 254. 3 tandem repeats follow at residues serine 69–proline 73, serine 76–proline 80, and serine 83–proline 87. The segment at serine 69–proline 182 is 4 X 5 AA repeats of S-P(4). Copy 4 of the repeat occupies serine 178–proline 182. The N-linked (GlcNAc...) asparagine glycan is linked to asparagine 310.

Pistil (stigma and style tissue).

This is Pistil-specific extensin-like protein from Nicotiana tabacum (Common tobacco).